The following is a 551-amino-acid chain: ATP synthase subunit alpha, mitochondrial (551 aa).

Residue 210–217 (GDRQTGKT) participates in ATP binding.

This sequence belongs to the ATPase alpha/beta chains family. As to quaternary structure, F-type ATPases have 2 components, CF(1) - the catalytic core - and CF(0) - the membrane proton channel. CF(1) has five subunits: alpha(3), beta(3), gamma(1), delta(1), epsilon(1). CF(0) has three main subunits: a, b and c.

It is found in the mitochondrion. Its subcellular location is the mitochondrion inner membrane. In terms of biological role, mitochondrial membrane ATP synthase (F(1)F(0) ATP synthase or Complex V) produces ATP from ADP in the presence of a proton gradient across the membrane which is generated by electron transport complexes of the respiratory chain. F-type ATPases consist of two structural domains, F(1) - containing the extramembraneous catalytic core, and F(0) - containing the membrane proton channel, linked together by a central stalk and a peripheral stalk. During catalysis, ATP synthesis in the catalytic domain of F(1) is coupled via a rotary mechanism of the central stalk subunits to proton translocation. Subunits alpha and beta form the catalytic core in F(1). Rotation of the central stalk against the surrounding alpha(3)beta(3) subunits leads to hydrolysis of ATP in three separate catalytic sites on the beta subunits. Subunit alpha does not bear the catalytic high-affinity ATP-binding sites. The protein is ATP synthase subunit alpha, mitochondrial (atp-1) of Neurospora crassa (strain ATCC 24698 / 74-OR23-1A / CBS 708.71 / DSM 1257 / FGSC 987).